The following is a 423-amino-acid chain: Glucose-1-phosphate adenylyltransferase (423 aa).

Residues Y98, G163, 178–179 (EK), and S189 contribute to the alpha-D-glucose 1-phosphate site.

This sequence belongs to the bacterial/plant glucose-1-phosphate adenylyltransferase family. As to quaternary structure, homotetramer.

The catalysed reaction is alpha-D-glucose 1-phosphate + ATP + H(+) = ADP-alpha-D-glucose + diphosphate. It participates in glycan biosynthesis; glycogen biosynthesis. Involved in the biosynthesis of ADP-glucose, a building block required for the elongation reactions to produce glycogen. Catalyzes the reaction between ATP and alpha-D-glucose 1-phosphate (G1P) to produce pyrophosphate and ADP-Glc. This chain is Glucose-1-phosphate adenylyltransferase, found in Thermotoga sp. (strain RQ2).